A 151-amino-acid chain; its full sequence is Small ribosomal subunit protein uS11 (151 aa).

The segment at 131-151 (DVTPVPSDSTRRKGGRRGRRL) is disordered. Basic residues predominate over residues 142 to 151 (RKGGRRGRRL).

This sequence belongs to the universal ribosomal protein uS11 family.

The sequence is that of Small ribosomal subunit protein uS11 from Bombyx mori (Silk moth).